The chain runs to 164 residues: Lipoprotein signal peptidase (164 aa).

The next 4 helical transmembrane spans lie at 6–26 (LGIL…LWLL), 39–59 (VTSF…GWFA), 65–85 (GQIL…IWMA), and 88–108 (TTKL…GNAI). Catalysis depends on residues Asp-118 and Asp-140. The chain crosses the membrane as a helical span at residues 141–161 (VAIVVGVVALLYDSLIGAPAV).

This sequence belongs to the peptidase A8 family.

It localises to the cell inner membrane. The enzyme catalyses Release of signal peptides from bacterial membrane prolipoproteins. Hydrolyzes -Xaa-Yaa-Zaa-|-(S,diacylglyceryl)Cys-, in which Xaa is hydrophobic (preferably Leu), and Yaa (Ala or Ser) and Zaa (Gly or Ala) have small, neutral side chains.. Its pathway is protein modification; lipoprotein biosynthesis (signal peptide cleavage). Its function is as follows. This protein specifically catalyzes the removal of signal peptides from prolipoproteins. The chain is Lipoprotein signal peptidase from Rhodopseudomonas palustris (strain TIE-1).